The sequence spans 305 residues: D-alanine--D-alanine ligase (305 aa).

The 202-residue stretch at 99–300 (KLFFEKAGIR…YEEMIQTFVN (202 aa)) folds into the ATP-grasp domain. ATP is bound at residue 126–181 (NFTGTYPVVVKPNQEGSTIGLTVAETEEELLQGIEEAFRHDDTILIEEFIAGTEVT).

This sequence belongs to the D-alanine--D-alanine ligase family.

Its subcellular location is the cytoplasm. It catalyses the reaction 2 D-alanine + ATP = D-alanyl-D-alanine + ADP + phosphate + H(+). It participates in cell wall biogenesis; peptidoglycan biosynthesis. In terms of biological role, cell wall formation. The protein is D-alanine--D-alanine ligase of Halalkalibacterium halodurans (strain ATCC BAA-125 / DSM 18197 / FERM 7344 / JCM 9153 / C-125) (Bacillus halodurans).